Consider the following 141-residue polypeptide: uncharacterized protein (141 aa).

This is an uncharacterized protein from Clostridium pasteurianum.